We begin with the raw amino-acid sequence, 309 residues long: tRNA uridine(34) hydroxylase (309 aa).

The Rhodanese domain occupies 123 to 217 (DDPEVIVVDT…YLEEVPEEQT (95 aa)). The Cysteine persulfide intermediate role is filled by Cys-177.

The protein belongs to the TrhO family.

The enzyme catalyses uridine(34) in tRNA + AH2 + O2 = 5-hydroxyuridine(34) in tRNA + A + H2O. In terms of biological role, catalyzes oxygen-dependent 5-hydroxyuridine (ho5U) modification at position 34 in tRNAs. The protein is tRNA uridine(34) hydroxylase of Saccharophagus degradans (strain 2-40 / ATCC 43961 / DSM 17024).